The sequence spans 180 residues: Nudix hydrolase 16, mitochondrial (180 aa).

The Nudix hydrolase domain occupies 18–162 (GSRLVAGCIP…WMKDALVEGF (145 aa)). Position 60 (phenylalanine 60) interacts with substrate. Mn(2+)-binding residues include glycine 63, glutamate 78, glutamate 82, and glutamate 144. The Nudix box motif lies at 63 to 84 (GGWENDETVREAAAREAVEEAG).

It belongs to the Nudix hydrolase family. It depends on Mg(2+) as a cofactor. The cofactor is Mn(2+). Expressed in roots, leaves, stems and inflorescences.

It is found in the mitochondrion. Probably mediates the hydrolysis of some nucleoside diphosphate derivatives. The chain is Nudix hydrolase 16, mitochondrial (NUDT16) from Arabidopsis thaliana (Mouse-ear cress).